We begin with the raw amino-acid sequence, 90 residues long: MAVKIRLKRMGAKKNPFYRIVVADSRSPRDGRFIETIGTYNPVAEPAEIKINEELALKWLQNGAKPSDTVRSLLSKQGILEKFHNLKYGK.

Belongs to the bacterial ribosomal protein bS16 family.

In Geobacillus thermodenitrificans (strain NG80-2), this protein is Small ribosomal subunit protein bS16.